A 344-amino-acid chain; its full sequence is Phosphate acyltransferase (344 aa).

This sequence belongs to the PlsX family. As to quaternary structure, homodimer. Probably interacts with PlsY.

Its subcellular location is the cytoplasm. It catalyses the reaction a fatty acyl-[ACP] + phosphate = an acyl phosphate + holo-[ACP]. It participates in lipid metabolism; phospholipid metabolism. Functionally, catalyzes the reversible formation of acyl-phosphate (acyl-PO(4)) from acyl-[acyl-carrier-protein] (acyl-ACP). This enzyme utilizes acyl-ACP as fatty acyl donor, but not acyl-CoA. This is Phosphate acyltransferase from Actinobacillus pleuropneumoniae serotype 5b (strain L20).